The chain runs to 346 residues: Methylthioribose-1-phosphate isomerase 1 (346 aa).

Substrate contacts are provided by residues 48-50 (RGA), arginine 91, and glutamine 196. Catalysis depends on aspartate 237, which acts as the Proton donor. Residue 247–248 (NK) coordinates substrate.

The protein belongs to the eIF-2B alpha/beta/delta subunits family. MtnA subfamily.

It catalyses the reaction 5-(methylsulfanyl)-alpha-D-ribose 1-phosphate = 5-(methylsulfanyl)-D-ribulose 1-phosphate. Its pathway is amino-acid biosynthesis; L-methionine biosynthesis via salvage pathway; L-methionine from S-methyl-5-thio-alpha-D-ribose 1-phosphate: step 1/6. Functionally, catalyzes the interconversion of methylthioribose-1-phosphate (MTR-1-P) into methylthioribulose-1-phosphate (MTRu-1-P). The chain is Methylthioribose-1-phosphate isomerase 1 from Pseudothermotoga lettingae (strain ATCC BAA-301 / DSM 14385 / NBRC 107922 / TMO) (Thermotoga lettingae).